The following is a 642-amino-acid chain: Assimilatory sulfite reductase (ferredoxin), chloroplastic (642 aa).

The N-terminal 61 residues, 1–61 (MSSTFRAPAG…SSSSSSPIQA (61 aa)), are a transit peptide targeting the chloroplast. Residues 46 to 74 (PVPPSASSSSSSPIQAVSTPAKPETATKR) are disordered. 4 residues coordinate [4Fe-4S] cluster: cysteine 503, cysteine 509, cysteine 549, and cysteine 553. Cysteine 553 contacts siroheme.

The protein belongs to the nitrite and sulfite reductase 4Fe-4S domain family. As to quaternary structure, monomer. Interacts with ferredoxin. Requires siroheme as cofactor. [4Fe-4S] cluster serves as cofactor. In terms of processing, phosphorylated; this phosphorylation reduces DNA-binding. In terms of tissue distribution, present in leaves and roots.

The protein localises to the plastid. It localises to the chloroplast stroma. The protein resides in the chloroplast nucleoid. It is found in the plastid stroma. It catalyses the reaction hydrogen sulfide + 6 oxidized [2Fe-2S]-[ferredoxin] + 3 H2O = sulfite + 6 reduced [2Fe-2S]-[ferredoxin] + 7 H(+). In terms of biological role, essential protein with sulfite reductase activity required in assimilatory sulfate reduction pathway during both primary and secondary metabolism and thus involved in development and growth. Its function is as follows. DNA-binding protein that binds to both double-stranded and single-stranded DNA without significant sequence specificity to reversibly repress the transcriptional activity of chloroplast nucleoids by promoting DNA compaction and possibly regulate DNA replication. This chain is Assimilatory sulfite reductase (ferredoxin), chloroplastic (SIR), found in Arabidopsis thaliana (Mouse-ear cress).